A 349-amino-acid chain; its full sequence is Anthranilate phosphoribosyltransferase (349 aa).

5-phospho-alpha-D-ribose 1-diphosphate is bound by residues Gly-81, 84–85, Thr-89, 91–94, 109–117, and Ala-121; these read GD, NVST, and KHGNRAASS. Anthranilate is bound at residue Gly-81. Ser-93 provides a ligand contact to Mg(2+). Asn-112 contributes to the anthranilate binding site. Arg-167 lines the anthranilate pocket. Mg(2+) contacts are provided by Asp-226 and Glu-227.

The protein belongs to the anthranilate phosphoribosyltransferase family. In terms of assembly, homodimer. It depends on Mg(2+) as a cofactor.

It carries out the reaction N-(5-phospho-beta-D-ribosyl)anthranilate + diphosphate = 5-phospho-alpha-D-ribose 1-diphosphate + anthranilate. Its pathway is amino-acid biosynthesis; L-tryptophan biosynthesis; L-tryptophan from chorismate: step 2/5. Catalyzes the transfer of the phosphoribosyl group of 5-phosphorylribose-1-pyrophosphate (PRPP) to anthranilate to yield N-(5'-phosphoribosyl)-anthranilate (PRA). The sequence is that of Anthranilate phosphoribosyltransferase from Methylocella silvestris (strain DSM 15510 / CIP 108128 / LMG 27833 / NCIMB 13906 / BL2).